Consider the following 496-residue polypeptide: MTTGYILIAAILILGGVIATVGDRIGTRVGKARLSLFNLRPKNTAVLVTILTGGLVSATTLAILFIADEGLRKGVFELEDIQKDLRQKREQLKVAEEQKTQVEIERNKVNQELETTRTDKKQVETQRDQAKKEKLKAQQDLAQTQAQYQRTQSRLGQVVTQYQKAIAELQSVYNQRKALQGAVEQLKTERRRLYAEAKKAIEQRDRELANRQQAIEQRDRELANRQQALQQRDQKISQLDKIIQNRNLEIAQREEVIAKRESRLKELETQQDYLEQEVARLEKYYQSYRDLRLGKLALVRGQVLASAVIRTNQVAATRQIIIQLLQEANRNASLELSEPGSNSANIELLRITPDRIEQLIQQINDGREYVVRIFSAGNYVRGENQIEFFADTARNVLVFSGSEVLATTTADPRSMTSYQLRQRLDLLISASQFRARNAGIVEGVQIDGTFLRFVSLLRQLDQPIEIKAIAAEDTYTAGPLRVRLVAIQNGKVILST.

A signal peptide spans 1–19; the sequence is MTTGYILIAAILILGGVIA. A helical transmembrane segment spans residues 45–67; it reads AVLVTILTGGLVSATTLAILFIA. A disordered region spans residues 113 to 137; sequence LETTRTDKKQVETQRDQAKKEKLKA.

The protein localises to the membrane. This is an uncharacterized protein from Nostoc sp. (strain PCC 7120 / SAG 25.82 / UTEX 2576).